The following is a 246-amino-acid chain: Major prion protein (246 aa).

The first 15 residues, 1 to 15, serve as a signal peptide directing secretion; sequence MLVLFVATWSDLGLC. The interval 16 to 223 is interaction with GRB2, ERI3 and SYN1; the sequence is KKRPKPGGWN…ESQAYYQRGS (208 aa). The interval 18 to 102 is disordered; the sequence is RPKPGGWNTG…HKPSKPKTSM (85 aa). 5 consecutive repeat copies span residues 44 to 52, 53 to 60, 61 to 68, 69 to 76, and 77 to 84. A 5 X 8 AA tandem repeats of P-H-G-G-G-W-G-Q region spans residues 44-84; the sequence is PQGGGGWGQPHGGGWGQPHGGGWGQPHGGGWGQPHGGGWGQ. The segment covering 45–88 has biased composition (gly residues); sequence QGGGGWGQPHGGGWGQPHGGGWGQPHGGGWGQPHGGGWGQGGGT. Residues His-54, Gly-55, Gly-56, His-62, Gly-63, Gly-64, His-70, Gly-71, Gly-72, His-78, Gly-79, and Gly-80 each coordinate Cu(2+). The span at 91–102 shows a compositional bias: basic residues; sequence QWHKPSKPKTSM. The cysteines at positions 172 and 207 are disulfide-linked. 2 N-linked (GlcNAc...) asparagine glycosylation sites follow: Asn-174 and Asn-190. Ser-223 carries GPI-anchor amidated serine lipidation. Positions 224–246 are cleaved as a propeptide — removed in mature form; the sequence is SMVLFSSPPVILLISFLIFLIVG.

This sequence belongs to the prion family. As to quaternary structure, monomer and homodimer. Has a tendency to aggregate into amyloid fibrils containing a cross-beta spine, formed by a steric zipper of superposed beta-strands. Soluble oligomers may represent an intermediate stage on the path to fibril formation. Copper binding may promote oligomerization. Interacts with GRB2, APP, ERI3/PRNPIP and SYN1. Mislocalized cytosolically exposed PrP interacts with MGRN1; this interaction alters MGRN1 subcellular location and causes lysosomal enlargement. Interacts with KIAA1191.

The protein resides in the cell membrane. The protein localises to the golgi apparatus. Its primary physiological function is unclear. Has cytoprotective activity against internal or environmental stresses. May play a role in neuronal development and synaptic plasticity. May be required for neuronal myelin sheath maintenance. May play a role in iron uptake and iron homeostasis. Soluble oligomers are toxic to cultured neuroblastoma cells and induce apoptosis (in vitro). Association with GPC1 (via its heparan sulfate chains) targets PRNP to lipid rafts. Also provides Cu(2+) or Zn(2+) for the ascorbate-mediated GPC1 deaminase degradation of its heparan sulfate side chains. This chain is Major prion protein (PRNP), found in Cercopithecus mona (Mona monkey).